The sequence spans 232 residues: Phosphoribosylformylglycinamidine synthase subunit PurQ (232 aa).

The Glutamine amidotransferase type-1 domain occupies 2–232 (KIAILQFGGT…SMVDYITENF (231 aa)). Cys-86 serves as the catalytic Nucleophile. Catalysis depends on residues His-203 and Glu-205.

In terms of assembly, part of the FGAM synthase complex composed of 1 PurL, 1 PurQ and 2 PurS subunits.

The protein resides in the cytoplasm. It catalyses the reaction N(2)-formyl-N(1)-(5-phospho-beta-D-ribosyl)glycinamide + L-glutamine + ATP + H2O = 2-formamido-N(1)-(5-O-phospho-beta-D-ribosyl)acetamidine + L-glutamate + ADP + phosphate + H(+). The catalysed reaction is L-glutamine + H2O = L-glutamate + NH4(+). It functions in the pathway purine metabolism; IMP biosynthesis via de novo pathway; 5-amino-1-(5-phospho-D-ribosyl)imidazole from N(2)-formyl-N(1)-(5-phospho-D-ribosyl)glycinamide: step 1/2. Its function is as follows. Part of the phosphoribosylformylglycinamidine synthase complex involved in the purines biosynthetic pathway. Catalyzes the ATP-dependent conversion of formylglycinamide ribonucleotide (FGAR) and glutamine to yield formylglycinamidine ribonucleotide (FGAM) and glutamate. The FGAM synthase complex is composed of three subunits. PurQ produces an ammonia molecule by converting glutamine to glutamate. PurL transfers the ammonia molecule to FGAR to form FGAM in an ATP-dependent manner. PurS interacts with PurQ and PurL and is thought to assist in the transfer of the ammonia molecule from PurQ to PurL. This chain is Phosphoribosylformylglycinamidine synthase subunit PurQ, found in Methanosarcina barkeri (strain Fusaro / DSM 804).